The primary structure comprises 302 residues: Tritrans,polycis-undecaprenyl-diphosphate synthase (geranylgeranyl-diphosphate specific) (302 aa).

Asp33 is an active-site residue. A Mg(2+)-binding site is contributed by Asp33. Substrate-binding positions include 34 to 37 and 78 to 80; these read GNRR and STE. Asn81 acts as the Proton acceptor in catalysis. Substrate is bound by residues Phe82, Arg84, Arg203, and 209–211; that span reads RTS.

It belongs to the UPP synthase family. In terms of assembly, homodimer. Requires Mg(2+) as cofactor.

The catalysed reaction is geranylgeranyl diphosphate + 7 isopentenyl diphosphate = tri-trans,hepta-cis-undecaprenyl diphosphate + 7 diphosphate. In terms of biological role, catalyzes the sequential condensation of isopentenyl diphosphate (IPP) with geranylgeranyl diphosphate (GGPP) to yield (2Z,6Z,10Z,14Z,18Z,22Z,26Z,30E,34E,38E)-undecaprenyl diphosphate (tritrans,heptacis-UPP). It is probably the precursor of glycosyl carrier lipids. The sequence is that of Tritrans,polycis-undecaprenyl-diphosphate synthase (geranylgeranyl-diphosphate specific) from Halobacterium salinarum (strain ATCC 700922 / JCM 11081 / NRC-1) (Halobacterium halobium).